The chain runs to 486 residues: Transcription factor VOZ1 (486 aa).

Positions 208-405 (PPSAFLGPKC…VDGKKTSKGK (198 aa)) are VOZ. Residues Cys217, Cys222, Cys236, and His240 each contribute to the Zn(2+) site. The segment at 217–240 (CALWDCPRPAQGFDWFQDYCSSFH) adopts a C3H1-type; atypical zinc-finger fold. Residues 424–445 (EFPPENNTTNTTNNNKRCIKGR) are disordered. Over residues 429-438 (NNTTNTTNNN) the composition is skewed to low complexity.

As to quaternary structure, homodimer. Interacts with phytochrome B (phyB). In terms of tissue distribution, ubiquitous. Expressed in the vascular bundles of various tissues, specifically in the phloem.

It localises to the cytoplasm. Its subcellular location is the nucleus. Its function is as follows. Transcriptional activator acting positively in the phytochrome B signaling pathway. Functions redundantly with VOZ2 to promote flowering downstream of phytochrome B (phyB). Down-regulates 'FLOWERING LOCUS C' (FLC) and up-regulates 'FLOWERING LOCUS T' (FT). Binds to the 38-bp cis-acting region of the AVP1 gene. Interacts with phyB in the cytoplasm and is translocated to the nucleus at signal transmission, where it is subjected to degradation in a phytochrome-dependent manner. This is Transcription factor VOZ1 (VOZ1) from Arabidopsis thaliana (Mouse-ear cress).